The sequence spans 313 residues: Porphobilinogen deaminase (313 aa).

Cysteine 242 carries the S-(dipyrrolylmethanemethyl)cysteine modification.

The protein belongs to the HMBS family. Monomer. Dipyrromethane is required as a cofactor.

It catalyses the reaction 4 porphobilinogen + H2O = hydroxymethylbilane + 4 NH4(+). Its pathway is porphyrin-containing compound metabolism; protoporphyrin-IX biosynthesis; coproporphyrinogen-III from 5-aminolevulinate: step 2/4. Its function is as follows. Tetrapolymerization of the monopyrrole PBG into the hydroxymethylbilane pre-uroporphyrinogen in several discrete steps. This is Porphobilinogen deaminase from Pectobacterium carotovorum subsp. carotovorum (strain PC1).